The chain runs to 138 residues: Basic phospholipase A2 Drk-b1 (138 aa).

Positions Met1–Gly16 are cleaved as a signal peptide. 7 disulfides stabilise this stretch: Cys42–Cys131, Cys44–Cys60, Cys59–Cys111, Cys65–Cys138, Cys66–Cys104, Cys73–Cys97, and Cys91–Cys102. Tyr43, Gly45, and Gly47 together coordinate Ca(2+). Residue His63 is part of the active site. Asp64 is a binding site for Ca(2+). The active site involves Asp105.

Ca(2+) serves as cofactor. In terms of tissue distribution, expressed by the venom gland.

The protein localises to the secreted. It carries out the reaction a 1,2-diacyl-sn-glycero-3-phosphocholine + H2O = a 1-acyl-sn-glycero-3-phosphocholine + a fatty acid + H(+). In terms of biological role, exhibits high hydrolytic activities and shows strong preference for the anionic micelles (dPPC with deoxycholate) to the zwitterionic micelles (dPPC with Triton X-100). PLA2 catalyzes the calcium-dependent hydrolysis of the 2-acyl groups in 3-sn-phosphoglycerides. This Daboia russelii (Russel's viper) protein is Basic phospholipase A2 Drk-b1.